Reading from the N-terminus, the 600-residue chain is Elongation factor 4 (600 aa).

A tr-type G domain is found at 4 to 186 (KNVRNFCIIA…AIVNRIPPPK (183 aa)). GTP is bound by residues 16 to 21 (DHGKST) and 133 to 136 (NKID).

Belongs to the TRAFAC class translation factor GTPase superfamily. Classic translation factor GTPase family. LepA subfamily.

The protein resides in the cell inner membrane. It catalyses the reaction GTP + H2O = GDP + phosphate + H(+). Its function is as follows. Required for accurate and efficient protein synthesis under certain stress conditions. May act as a fidelity factor of the translation reaction, by catalyzing a one-codon backward translocation of tRNAs on improperly translocated ribosomes. Back-translocation proceeds from a post-translocation (POST) complex to a pre-translocation (PRE) complex, thus giving elongation factor G a second chance to translocate the tRNAs correctly. Binds to ribosomes in a GTP-dependent manner. The chain is Elongation factor 4 from Aquifex aeolicus (strain VF5).